The chain runs to 338 residues: MSEISNRLEARLAREWQQRGPLAWALTPFACVFGAIAAARRAAFSFGWLKSVRVGVPVVVVGNVTVGGTGKTPTVIALVEALRVAGFNPGVVSRGYGARVTTPTQITPASAASVGGDEPLLISRRTGAPVWVCPDRVAAAQALCAAHREVDVIVSDDGLQHYRLQRDVELVVFDHRLGGNGFLLPAGPLREPLSRRRDATLINDPYARTLPAWPNTFALQLAPGDAWHLDNPALRRPLAQFSGDRVLAAAGIGAPERFFATLRAAGLTPATRALPDHYAFERNPFTDVDADTILITEKDAVKLGSWHDARIWVVPVEAALDHRLIALVVEKVRGRSPA.

65-72 (TVGGTGKT) lines the ATP pocket.

It belongs to the LpxK family.

The enzyme catalyses a lipid A disaccharide + ATP = a lipid IVA + ADP + H(+). The protein operates within glycolipid biosynthesis; lipid IV(A) biosynthesis; lipid IV(A) from (3R)-3-hydroxytetradecanoyl-[acyl-carrier-protein] and UDP-N-acetyl-alpha-D-glucosamine: step 6/6. In terms of biological role, transfers the gamma-phosphate of ATP to the 4'-position of a tetraacyldisaccharide 1-phosphate intermediate (termed DS-1-P) to form tetraacyldisaccharide 1,4'-bis-phosphate (lipid IVA). This is Tetraacyldisaccharide 4'-kinase from Paraburkholderia xenovorans (strain LB400).